Here is a 150-residue protein sequence, read N- to C-terminus: Deoxyuridine 5'-triphosphate nucleotidohydrolase (150 aa).

Substrate is bound by residues 70–72, N83, and 87–89; these read RSG and TID.

This sequence belongs to the dUTPase family. It depends on Mg(2+) as a cofactor.

The enzyme catalyses dUTP + H2O = dUMP + diphosphate + H(+). It functions in the pathway pyrimidine metabolism; dUMP biosynthesis; dUMP from dCTP (dUTP route): step 2/2. This enzyme is involved in nucleotide metabolism: it produces dUMP, the immediate precursor of thymidine nucleotides and it decreases the intracellular concentration of dUTP so that uracil cannot be incorporated into DNA. The polypeptide is Deoxyuridine 5'-triphosphate nucleotidohydrolase (Desulfotalea psychrophila (strain LSv54 / DSM 12343)).